The chain runs to 108 residues: Thioredoxin (108 aa).

The 107-residue stretch at Ser-2–Leu-108 folds into the Thioredoxin domain. The cysteines at positions 33 and 36 are disulfide-linked.

Belongs to the thioredoxin family.

In terms of biological role, component of the thioredoxin-thioredoxin reductase system. Participates in various redox reactions through the reversible oxidation of its active center dithiol to a disulfide and catalyzes dithiol-disulfide exchange reactions. This is Thioredoxin (trxA) from Acidithiobacillus ferridurans.